Consider the following 235-residue polypeptide: Probable transcriptional regulatory protein Ccon26_04940 (235 aa).

It belongs to the TACO1 family.

Its subcellular location is the cytoplasm. The chain is Probable transcriptional regulatory protein Ccon26_04940 from Campylobacter concisus (strain 13826).